Here is a 913-residue protein sequence, read N- to C-terminus: MAYRGGGPNDYEGHDLQDLPPGSGNGSRDEGVDDVGQSLLRDPHARGTSPYEHHLGAQEPPARPVSAYSLTESYAPDAGSRTPAPPPDNFGVGTGYSQELDPQNGGFGYGRPASTVDTDESWVRRQQPGAQTGGLKRYATRKIKLQQGSVLSIDYPVPSAIKNAVQPKYRDVEGGSEEFMKMRYTAATCDPNDFTLKNGYDLRPRMYNRHTEVLIAITYYNEDKNLLSRTLHGVMQNIRDIVNLKKSTFWNKGGPAWQKIVVCLVFDGIEKADKNVLDVLATVGIYQDGVVKKDVDGKETIAHIFEYTSQLSVTPNQQLIRPVDDGPSTLPPVQFIFCLKGKNSKKINSHRWLFNAFGRILNPEICILLDAGTKPSPRSLLALWEGFYNDKDLGGACGEIHAMLGKGGKKLLNPLVAVQNFEYKISNILDKPLESSFGYVSVLPGAFSAYRFRAIMGRPLEQYFHGDHTLSKILGKKGIDGMNIFKKNMFLAEDRILCFELVAKAGQKWHLSYIKAAKGETDVPEGAAEFISQRRRWLNGSFAASLYSLMHFGRMYKSGHNLIRMFFFHIQLIYNVLNVIFTWFSLASYYLTTSIIMNLVGTPTEASADSSAHTAWPFGDSATPIINSILQYLYLAFLVIQFVLALGNRPKGSKFTYIASFIVFGFIQTYILVLSGYLVARAFNTPIGDQISLESGKAFVDSFFGGDNAAGVILVALVTIYGLNFIASFMYLDPWHMFHSFPYYLVLMSTYINILMVYAFNNWHDVSWGTKGSDKAEALPSAHISKGEKGEEAVVEEIDKPQEDIDSQFEQTVRRALEPFKEVEEVEKRDVEDSYKSFRTGLVVSWLFSNAALIVFITTDDFNAFGFSDDPNGRSAAFFSFLLYSTAVLALVRFTGFLWFLGKTGIMCCIARR.

The segment at 1 to 135 (MAYRGGGPND…QQPGAQTGGL (135 aa)) is disordered. The N-linked (GlcNAc...) asparagine glycan is linked to N25. The span at 41-56 (RDPHARGTSPYEHHLG) shows a compositional bias: basic and acidic residues. N539 is a glycosylation site (N-linked (GlcNAc...) asparagine). 7 helical membrane passes run 566–586 (FFFH…WFSL), 625–645 (IINS…FVLA), 658–678 (IASF…SGYL), 712–732 (VILV…FMYL), 740–760 (SFPY…VYAF), 840–860 (TGLV…ITTD), and 881–901 (FLLY…LWFL).

The protein belongs to the chitin synthase family. Class III subfamily.

The protein resides in the cell membrane. It catalyses the reaction [(1-&gt;4)-N-acetyl-beta-D-glucosaminyl](n) + UDP-N-acetyl-alpha-D-glucosamine = [(1-&gt;4)-N-acetyl-beta-D-glucosaminyl](n+1) + UDP + H(+). Its function is as follows. Polymerizes chitin, a structural polymer of the cell wall and septum, by transferring the sugar moiety of UDP-GlcNAc to the non-reducing end of the growing chitin polymer. Plays a role in cell wall integrity and is involved in tolerance to hyperosmotic conditions. Required to successfully penetrate the host plants and thus plays a key role in pathogenicity. The protein is Chitin synthase 1 of Verticillium dahliae (strain VdLs.17 / ATCC MYA-4575 / FGSC 10137) (Verticillium wilt).